Consider the following 481-residue polypeptide: Protein PBN1 (481 aa).

Topologically, residues 1-451 are lumenal; it reads MRQRTTIYNP…TTFDRVNNIT (451 aa). N-linked (GlcNAc...) asparagine glycans are attached at residues Asn22, Asn52, Asn72, Asn174, Asn206, Asn266, Asn290, Asn347, Asn360, and Asn449. Residues 452-472 form a helical membrane-spanning segment; that stretch reads SLGLLIGVLMILYAISIRVFM. At 473 to 481 the chain is on the cytoplasmic side; it reads STTSKTKRD.

The protein belongs to the PIGX family.

It localises to the endoplasmic reticulum membrane. It participates in glycolipid biosynthesis; glycosylphosphatidylinositol-anchor biosynthesis. Required for proper folding and/or the stability of a subset of proteins in the endoplasmic reticulum. Component of glycosylphosphatidylinositol-mannosyltransferase 1 which transfers the first of the 4 mannoses in the GPI-anchor precursors during GPI-anchor biosynthesis. Probably acts by stabilizing the mannosyltransferase GPI14. The polypeptide is Protein PBN1 (PBN1) (Candida albicans (strain SC5314 / ATCC MYA-2876) (Yeast)).